A 491-amino-acid chain; its full sequence is Glutamyl-tRNA(Gln) amidotransferase subunit A (491 aa).

Active-site charge relay system residues include Lys77 and Ser152. The active-site Acyl-ester intermediate is the Ser176.

Belongs to the amidase family. GatA subfamily. Heterotrimer of A, B and C subunits.

The catalysed reaction is L-glutamyl-tRNA(Gln) + L-glutamine + ATP + H2O = L-glutaminyl-tRNA(Gln) + L-glutamate + ADP + phosphate + H(+). Functionally, allows the formation of correctly charged Gln-tRNA(Gln) through the transamidation of misacylated Glu-tRNA(Gln) in organisms which lack glutaminyl-tRNA synthetase. The reaction takes place in the presence of glutamine and ATP through an activated gamma-phospho-Glu-tRNA(Gln). The polypeptide is Glutamyl-tRNA(Gln) amidotransferase subunit A (Chlamydia trachomatis serovar A (strain ATCC VR-571B / DSM 19440 / HAR-13)).